We begin with the raw amino-acid sequence, 227 residues long: Translation initiation factor 6 (227 aa).

It belongs to the eIF-6 family.

Functionally, binds to the 50S ribosomal subunit and prevents its association with the 30S ribosomal subunit to form the 70S initiation complex. This chain is Translation initiation factor 6, found in Pyrococcus horikoshii (strain ATCC 700860 / DSM 12428 / JCM 9974 / NBRC 100139 / OT-3).